Consider the following 817-residue polypeptide: Disks large homolog 3 (817 aa).

M1 and H2 each carry N-acetylmethionine. The interval 33 to 101 is disordered; that stretch reads WQVPDPYGPG…GKSTPKLNGS (69 aa). The segment covering 40–53 has biased composition (gly residues); sequence GPGGGNGASAGYGG. Positions 57–69 are enriched in polar residues; that stretch reads QTLPSQAGATPTP. 3 consecutive PDZ domains span residues 130-217, 226-311, and 379-465; these read EEIV…VRRR, EVNL…KVAK, and DFTR…VAQY. S139 is subject to Phosphoserine. The SH3 domain occupies 501–571; sequence KRSLYVRALF…PSKKRVEKKE (71 aa). Positions 627–802 constitute a Guanylate kinase-like domain; the sequence is ARPVIILGPM…IYNKIKQIIE (176 aa). Y673 is subject to Phosphotyrosine.

It belongs to the MAGUK family. Interacts through its PDZ domains with NETO1, GRIN2B and SYNGAP1. Interacts through its guanylate kinase-like domain with DLGAP1, DLGAP2, DLGAP3 and DLGAP4. Interacts with FLTP/C1orf192. Interacts through its PDZ domains with APC. Interacts through its first two PDZ domains with ERBB4. Interacts through its third PDZ domain with NLGN1, and probably with NLGN2 and NLGN3. Interacts with FRMPD4 (via C-terminus). Interacts with LRFN1, LRFN2 and LRFN4. Interacts with DGKI (via PDZ-binding motif).

Functionally, required for learning most likely through its role in synaptic plasticity following NMDA receptor signaling. This Homo sapiens (Human) protein is Disks large homolog 3 (DLG3).